Reading from the N-terminus, the 504-residue chain is MTQTNGFDALHAHAQRLRGAAIPALLAAEPQRPTQYARQVGPLYFNFARQKYDRAALDALFAIARERDLAGAFQRLFRGEQVNVTEQRAALHTALRGDLTDAPVASEAYATAAEVRQRMGALIQQLEATEVTDIVSVGIGGSDLGPRLVADALRPVSGARFRVHFVSNVDGAAMQRTLATLDPARTAGILISKTFGTQETLLNGSILHAWLGGSERLYAVSANPERAAKAFDIAPGRVLPMWDWVGGRYSLWSAVGFPIALAIGFERFEQLLEGAAQFDAHVLNTPLEENVAVLHGLTAVWNRNLLGSATHAVMTYDQRLALLPSYLQQLVMESLGKRVKLDGSAVDSDTVSVWWGGAGTDVQHSFFQALHQGTSVVPADFIGTVHNDDPYAENHVALMANVLAQTEALANGQDSSDPHRSYPGGRPSTVILLDALTPQALGGLISMYEHSVYVQSVMWGINAFDQFGVELGKQLASQLLPALKGEAADVADPVTRELLSKLRG.

The Proton donor role is filled by Glu-333. Active-site residues include His-364 and Lys-473.

This sequence belongs to the GPI family.

The protein resides in the cytoplasm. It catalyses the reaction alpha-D-glucose 6-phosphate = beta-D-fructose 6-phosphate. The protein operates within carbohydrate biosynthesis; gluconeogenesis. Its pathway is carbohydrate degradation; glycolysis; D-glyceraldehyde 3-phosphate and glycerone phosphate from D-glucose: step 2/4. Catalyzes the reversible isomerization of glucose-6-phosphate to fructose-6-phosphate. In Xanthomonas euvesicatoria pv. vesicatoria (strain 85-10) (Xanthomonas campestris pv. vesicatoria), this protein is Glucose-6-phosphate isomerase.